A 594-amino-acid polypeptide reads, in one-letter code: UvrABC system protein C (594 aa).

Residues 14 to 91 enclose the GIY-YIG domain; sequence DQPGCYLMKD…IKKHDPKYNI (78 aa). In terms of domain architecture, UVR spans 196-231; it reads KEVRSELETKMYEASEKLEFERAKELRDQIAHIDAI.

It belongs to the UvrC family. Interacts with UvrB in an incision complex.

It is found in the cytoplasm. In terms of biological role, the UvrABC repair system catalyzes the recognition and processing of DNA lesions. UvrC both incises the 5' and 3' sides of the lesion. The N-terminal half is responsible for the 3' incision and the C-terminal half is responsible for the 5' incision. This chain is UvrABC system protein C, found in Bacillus thuringiensis (strain Al Hakam).